A 97-amino-acid chain; its full sequence is MKFFAAAALFIAGVLAAPSPNAANSVTPLCNPGLYSNAQCCAVDVLGVADLNCATPPGVVNNAAEFQAACAKIGQEARCCVLPVLGQDVLCETPLGL.

A signal peptide spans 1–16 (MKFFAAAALFIAGVLA). Intrachain disulfides connect C30/C79, C40/C70, C41/C53, and C80/C91.

This sequence belongs to the cerato-ulmin hydrophobin family. In terms of assembly, homodimer. Homodimers further self-assemble to form highly ordered films at water-air interfaces through intermolecular interactions.

It localises to the secreted. The protein resides in the cell wall. Its function is as follows. Aerial growth, conidiation, and dispersal of filamentous fungi in the environment rely upon a capability of their secreting small amphipathic proteins called hydrophobins (HPBs) with low sequence identity. Class I can self-assemble into an outermost layer of rodlet bundles on aerial cell surfaces, conferring cellular hydrophobicity that supports fungal growth, development and dispersal; whereas Class II form highly ordered films at water-air interfaces through intermolecular interactions but contribute nothing to the rodlet structure. This Trichoderma asperellum (strain ATCC 204424 / CBS 433.97 / NBRC 101777) protein is Class II hydrophobin 3.